We begin with the raw amino-acid sequence, 232 residues long: Small ribosomal subunit protein uS2 (232 aa).

Belongs to the universal ribosomal protein uS2 family.

This Syntrophomonas wolfei subsp. wolfei (strain DSM 2245B / Goettingen) protein is Small ribosomal subunit protein uS2.